Here is a 302-residue protein sequence, read N- to C-terminus: Transmembrane protein 191 (302 aa).

A coiled-coil region spans residues 5 to 147 (QEQLLQLQKD…HLELAEAKFS (143 aa)). Positions 39 to 66 (LTGRLEELRERERSLQRRRSQASRAIRG) are disordered. Positions 42 to 53 (RLEELRERERSL) are enriched in basic and acidic residues. A helical transmembrane segment spans residues 242–262 (LQTLLLLPLGFLVLPLIYVVL).

This sequence belongs to the TMEM191 family.

The protein localises to the membrane. This Mus musculus (Mouse) protein is Transmembrane protein 191.